The chain runs to 266 residues: MSSRLRFLFSLAAAIAAASLLAAALRRRAPPSGLAARLVPAPMAAAAARNRSFVLWLHGLGDSGPANEPIRNFFSAPEFRLTKWAFPSAPNSPVSCNHGAVMPSWFDIHELPMSSGSPQDDSGVLKAVENVHAMIDKEVADGIPPENIFVCGFSQGGALTLASVLLYPKTLGGGAVFSGWLPFGSSVTERISPEARKTPILWSHGIADNVVLFEAGQAGPPFLQNAGFSCEFKAYPGLGHSISKEELYSLESWIKNHLKASQEKEN.

Catalysis depends on charge relay system residues serine 154, aspartate 208, and histidine 240.

The protein belongs to the AB hydrolase superfamily. AB hydrolase 2 family.

Its function is as follows. Possesses carboxylesterase activity in vitro. In Oryza sativa subsp. japonica (Rice), this protein is Probable carboxylesterase Os04g0669500.